The following is a 126-amino-acid chain: Fluoride-specific ion channel FluC (126 aa).

Transmembrane regions (helical) follow at residues 5 to 25 (ILCVGTGGFVGAILRFLFYFG), 34 to 54 (YIFIATICVNIIGSFIIGFVL), 71 to 91 (VTGLLGALTTFSTFTYENAVF), and 100 to 120 (FFLNITMSIILCLIFCFLGIY). Residues Gly-76 and Thr-79 each coordinate Na(+).

This sequence belongs to the fluoride channel Fluc/FEX (TC 1.A.43) family.

The protein resides in the cell inner membrane. The enzyme catalyses fluoride(in) = fluoride(out). With respect to regulation, na(+) is not transported, but it plays an essential structural role and its presence is essential for fluoride channel function. Its function is as follows. Fluoride-specific ion channel. Important for reducing fluoride concentration in the cell, thus reducing its toxicity. The sequence is that of Fluoride-specific ion channel FluC from Campylobacter hominis (strain ATCC BAA-381 / DSM 21671 / CCUG 45161 / LMG 19568 / NCTC 13146 / CH001A).